The primary structure comprises 508 residues: Zinc finger CCCH-type with G patch domain-containing protein (508 aa).

Positions 67 to 86 (QQESSHHDSGTPETDTKTSV) are disordered. Positions 69–86 (ESSHHDSGTPETDTKTSV) are enriched in basic and acidic residues. Residues 161–188 (RSMVPCPYFLEGKCKFAGAECRFSHGYL) form a C3H1-type zinc finger. The interval 253–282 (IYPLGPEEVESDSESDSQSDTGDSSSSKAA) is disordered. A compositionally biased stretch (acidic residues) spans 259–269 (EEVESDSESDS). A compositionally biased stretch (low complexity) spans 270–279 (QSDTGDSSSS). The region spanning 310–356 (TKGIGSKLMAKMGYIFGKGLGKDGEGRVEPIEVVVLPQGKSLDKCAE) is the G-patch domain. The segment at 404–426 (SLHDLRVSHPGAKPDIRKTRKSA) is disordered.

It is found in the nucleus. Functionally, transcription repressor. The sequence is that of Zinc finger CCCH-type with G patch domain-containing protein from Nematostella vectensis (Starlet sea anemone).